Here is a 202-residue protein sequence, read N- to C-terminus: Venom allergen 5 (202 aa).

4 cysteine pairs are disulfide-bonded: C4–C16, C8–C101, C26–C94, and C168–C185. The 142-residue stretch at 46–187 (KQHNEFRQKV…WHRHYLVCNY (142 aa)) folds into the SCP domain.

The protein belongs to the CRISP family. Venom allergen 5-like subfamily. Expressed by the venom gland.

Its subcellular location is the secreted. The polypeptide is Venom allergen 5 (Vespa mandarinia (Asian giant hornet)).